The primary structure comprises 685 residues: A-type ATP synthase subunit I (685 aa).

7 helical membrane-spanning segments follow: residues 172 to 192 (VGGL…VAVP), 348 to 368 (EIVP…LMFP), 394 to 414 (VIAV…EVFG), 464 to 484 (LFMG…NGVI), 538 to 558 (LVLA…PIIY), 604 to 624 (MFVI…ADVV), and 626 to 646 (ALLY…LAFA).

This sequence belongs to the V-ATPase 116 kDa subunit family. In terms of assembly, has multiple subunits with at least A(3), B(3), C, D, E, F, H, I and proteolipid K(x).

The protein resides in the cell membrane. Component of the A-type ATP synthase that produces ATP from ADP in the presence of a proton gradient across the membrane. The polypeptide is A-type ATP synthase subunit I (Aeropyrum pernix (strain ATCC 700893 / DSM 11879 / JCM 9820 / NBRC 100138 / K1)).